A 55-amino-acid chain; its full sequence is Large ribosomal subunit protein bL33 (55 aa).

Belongs to the bacterial ribosomal protein bL33 family.

The polypeptide is Large ribosomal subunit protein bL33 (Clavibacter sepedonicus (Clavibacter michiganensis subsp. sepedonicus)).